The following is a 415-amino-acid chain: Histidine--tRNA ligase (415 aa).

This sequence belongs to the class-II aminoacyl-tRNA synthetase family. As to quaternary structure, homodimer.

The protein localises to the cytoplasm. It catalyses the reaction tRNA(His) + L-histidine + ATP = L-histidyl-tRNA(His) + AMP + diphosphate + H(+). The protein is Histidine--tRNA ligase of Clostridium botulinum (strain ATCC 19397 / Type A).